The chain runs to 62 residues: Large ribosomal subunit protein bL28 (62 aa).

This sequence belongs to the bacterial ribosomal protein bL28 family.

This Clostridioides difficile (strain 630) (Peptoclostridium difficile) protein is Large ribosomal subunit protein bL28.